The sequence spans 400 residues: Large envelope protein (400 aa).

Position 1 is an N-acetylmethionine (methionine 1). Glycine 2 carries the N-myristoyl glycine; by host lipid modification. The interval 2–119 (GAPLSTTRRG…PPLRDTHPQA (118 aa)) is pre-S1. The interval 2–174 (GAPLSTTRRG…FLKTGGPATN (173 aa)) is pre-S. The Virion surface; in external conformation segment spans residues 2–181 (GAPLSTTRRG…ATNMDNITSG (180 aa)). Over 2–253 (GAPLSTTRRG…PGYRWMCLRR (252 aa)) the chain is Intravirion; in internal conformation. N-linked (GlcNAc...) asparagine glycosylation is present at proline 4. Residues 84–114 (VLTTLPADPPPASTNRRSGRKPTPVSPPLRD) form a disordered region. The tract at residues 120 to 174 (MQWNSTQFHQALLDPRVRALYFPAGGSSSETQNPAPTIASLTSSIFLKTGGPATN) is pre-S2. Residues 182-202 (LLGPLLVLQAVCFLLTKILTI) form a helical membrane-spanning segment. The Intravirion; in external conformation portion of the chain corresponds to 203–253 (PQSLDSWWTSLNFLGGTPGCPGQNSQSPTSNHLPTSCPPTCPGYRWMCLRR). Residues 254–274 (FIIFLFILLLCLIFLLVLVDY) form a helical membrane-spanning segment. Residues 275 to 348 (QGMLPVCPPL…WASARFSWLS (74 aa)) lie on the Virion surface side of the membrane. N-linked (GlcNAc...) asparagine; by host glycosylation is present at asparagine 320. A helical transmembrane segment spans residues 349–369 (LLVQFVQWCVGLSPTVWLLVI). Residues 370-375 (WMIWYW) are Intravirion-facing. A helical transmembrane segment spans residues 376-398 (GPNLCSILSPFIPLLPIFCYLWV). The Virion surface portion of the chain corresponds to 399 to 400 (SI).

Belongs to the orthohepadnavirus major surface antigen family. In its internal form (Li-HBsAg), interacts with the capsid protein and with the isoform S. Interacts with host chaperone CANX. In terms of assembly, associates with host chaperone CANX through its pre-S2 N glycan; this association may be essential for isoform M proper secretion. As to quaternary structure, interacts with isoform L. Interacts with the antigens of satellite virus HDV (HDVAgs); this interaction is required for encapsidation of HDV genomic RNA. In terms of processing, isoform M is N-terminally acetylated by host at a ratio of 90%, and N-glycosylated by host at the pre-S2 region. Myristoylated.

The protein resides in the virion membrane. In terms of biological role, the large envelope protein exists in two topological conformations, one which is termed 'external' or Le-HBsAg and the other 'internal' or Li-HBsAg. In its external conformation the protein attaches the virus to cell receptors and thereby initiating infection. This interaction determines the species specificity and liver tropism. This attachment induces virion internalization predominantly through caveolin-mediated endocytosis. The large envelope protein also assures fusion between virion membrane and endosomal membrane. In its internal conformation the protein plays a role in virion morphogenesis and mediates the contact with the nucleocapsid like a matrix protein. Functionally, the middle envelope protein plays an important role in the budding of the virion. It is involved in the induction of budding in a nucleocapsid independent way. In this process the majority of envelope proteins bud to form subviral lipoprotein particles of 22 nm of diameter that do not contain a nucleocapsid. This chain is Large envelope protein, found in Homo sapiens (Human).